We begin with the raw amino-acid sequence, 113 residues long: MLVVYMCIWVLYLLLFLFLFLFIASPASLRRSQTHILQCLYYFSLLLISGCAFFHQVLCLVLPLFCFVLFCFFYFFRSALEVFASLFPLPFSTRSHETISKSRIIIKAARGII.

The signal sequence occupies residues 1-29 (MLVVYMCIWVLYLLLFLFLFLFIASPASL). A run of 2 helical transmembrane segments spans residues 34–54 (THIL…CAFF) and 56–76 (QVLC…FYFF).

It is found in the membrane. This is an uncharacterized protein from Saccharomyces cerevisiae (strain ATCC 204508 / S288c) (Baker's yeast).